A 312-amino-acid chain; its full sequence is Ribosomal protein L11 methyltransferase (312 aa).

Threonine 163, glycine 184, aspartate 206, and asparagine 248 together coordinate S-adenosyl-L-methionine.

The protein belongs to the methyltransferase superfamily. PrmA family.

It localises to the cytoplasm. It carries out the reaction L-lysyl-[protein] + 3 S-adenosyl-L-methionine = N(6),N(6),N(6)-trimethyl-L-lysyl-[protein] + 3 S-adenosyl-L-homocysteine + 3 H(+). Methylates ribosomal protein L11. This is Ribosomal protein L11 methyltransferase from Clostridium botulinum (strain 657 / Type Ba4).